Consider the following 567-residue polypeptide: Glutamine-dependent NAD(+) synthetase (567 aa).

The 241-residue stretch at 2-242 folds into the CN hydrolase domain; the sequence is LNLTLAQLNF…EDILTVTLDL (241 aa). E41 acts as the Proton acceptor; for glutaminase activity in catalysis. K109 (for glutaminase activity) is an active-site residue. Y115 contacts L-glutamine. Catalysis depends on C145, which acts as the Nucleophile; for glutaminase activity. S172 and K178 together coordinate L-glutamine. The interval 287 to 567 is ligase; the sequence is PKEEEEIYAA…RMPVTNKFFK (281 aa). 316–323 contributes to the ATP binding site; that stretch reads GLSGGIDS. N399 contacts deamido-NAD(+). ATP is bound at residue T423. Deamido-NAD(+) is bound by residues E428 and K538.

It in the C-terminal section; belongs to the NAD synthetase family.

The catalysed reaction is deamido-NAD(+) + L-glutamine + ATP + H2O = L-glutamate + AMP + diphosphate + NAD(+) + H(+). It functions in the pathway cofactor biosynthesis; NAD(+) biosynthesis; NAD(+) from deamido-NAD(+) (L-Gln route): step 1/1. Catalyzes the ATP-dependent amidation of deamido-NAD to form NAD. Uses L-glutamine as a nitrogen source. The polypeptide is Glutamine-dependent NAD(+) synthetase (Aquifex aeolicus (strain VF5)).